We begin with the raw amino-acid sequence, 363 residues long: Probable transglycosylase BTH_I0986 (363 aa).

Belongs to the glycosyltransferase group 1 family. Glycosyltransferase 4 subfamily.

Probably a transglycosylase. Probably involved in synthesis of the outer membrane receptor for a cellular contact-dependent growth inhibition (CDI) system. The polypeptide is Probable transglycosylase BTH_I0986 (Burkholderia thailandensis (strain ATCC 700388 / DSM 13276 / CCUG 48851 / CIP 106301 / E264)).